A 422-amino-acid polypeptide reads, in one-letter code: UDP-N-acetylglucosamine 1-carboxyvinyltransferase 2 (422 aa).

22–23 (KN) contributes to the phosphoenolpyruvate binding site. Residue Arg-93 coordinates UDP-N-acetyl-alpha-D-glucosamine. Cys-117 acts as the Proton donor in catalysis. Residue Cys-117 is modified to 2-(S-cysteinyl)pyruvic acid O-phosphothioketal. UDP-N-acetyl-alpha-D-glucosamine contacts are provided by residues 122-126 (RPVDL), Asp-308, and Ile-330.

The protein belongs to the EPSP synthase family. MurA subfamily.

The protein resides in the cytoplasm. It catalyses the reaction phosphoenolpyruvate + UDP-N-acetyl-alpha-D-glucosamine = UDP-N-acetyl-3-O-(1-carboxyvinyl)-alpha-D-glucosamine + phosphate. It participates in cell wall biogenesis; peptidoglycan biosynthesis. In terms of biological role, cell wall formation. Adds enolpyruvyl to UDP-N-acetylglucosamine. In Legionella pneumophila (strain Lens), this protein is UDP-N-acetylglucosamine 1-carboxyvinyltransferase 2.